The chain runs to 86 residues: Large ribosomal subunit protein bL27 (86 aa).

A disordered region spans residues 1 to 31; the sequence is MAHKKAGGSSRNGRDSAGQRRGVKKFGGEPV.

The protein belongs to the bacterial ribosomal protein bL27 family.

The protein is Large ribosomal subunit protein bL27 of Desulfotalea psychrophila (strain LSv54 / DSM 12343).